A 160-amino-acid polypeptide reads, in one-letter code: SsrA-binding protein (160 aa).

The interval 133–160 (KKEHDKREDLKEREWQRDKERMMKNKGR) is disordered.

It belongs to the SmpB family.

Its subcellular location is the cytoplasm. In terms of biological role, required for rescue of stalled ribosomes mediated by trans-translation. Binds to transfer-messenger RNA (tmRNA), required for stable association of tmRNA with ribosomes. tmRNA and SmpB together mimic tRNA shape, replacing the anticodon stem-loop with SmpB. tmRNA is encoded by the ssrA gene; the 2 termini fold to resemble tRNA(Ala) and it encodes a 'tag peptide', a short internal open reading frame. During trans-translation Ala-aminoacylated tmRNA acts like a tRNA, entering the A-site of stalled ribosomes, displacing the stalled mRNA. The ribosome then switches to translate the ORF on the tmRNA; the nascent peptide is terminated with the 'tag peptide' encoded by the tmRNA and targeted for degradation. The ribosome is freed to recommence translation, which seems to be the essential function of trans-translation. The chain is SsrA-binding protein from Tolumonas auensis (strain DSM 9187 / NBRC 110442 / TA 4).